The primary structure comprises 417 residues: NADH-quinone oxidoreductase subunit D (417 aa).

Belongs to the complex I 49 kDa subunit family. NDH-1 is composed of 14 different subunits. Subunits NuoB, C, D, E, F, and G constitute the peripheral sector of the complex.

It localises to the cell inner membrane. The enzyme catalyses a quinone + NADH + 5 H(+)(in) = a quinol + NAD(+) + 4 H(+)(out). In terms of biological role, NDH-1 shuttles electrons from NADH, via FMN and iron-sulfur (Fe-S) centers, to quinones in the respiratory chain. The immediate electron acceptor for the enzyme in this species is believed to be ubiquinone. Couples the redox reaction to proton translocation (for every two electrons transferred, four hydrogen ions are translocated across the cytoplasmic membrane), and thus conserves the redox energy in a proton gradient. The sequence is that of NADH-quinone oxidoreductase subunit D from Nitrosomonas eutropha (strain DSM 101675 / C91 / Nm57).